We begin with the raw amino-acid sequence, 549 residues long: Cytoplasmic trehalase (549 aa).

Residues R168, 175-176 (WD), N212, 221-223 (RSQ), 292-294 (RDE), and G324 each bind substrate. Active-site proton donor/acceptor residues include D326 and E509. E525 is a binding site for substrate.

This sequence belongs to the glycosyl hydrolase 37 family. As to quaternary structure, monomer.

It is found in the cytoplasm. It catalyses the reaction alpha,alpha-trehalose + H2O = alpha-D-glucose + beta-D-glucose. It functions in the pathway glycan degradation; trehalose degradation; D-glucose from alpha,alpha-trehalose: step 1/1. Hydrolyzes trehalose to glucose. Could be involved, in cells returning to low osmolarity conditions, in the utilization of the accumulated cytoplasmic trehalose, which was synthesized in response to high osmolarity. The polypeptide is Cytoplasmic trehalase (Escherichia coli O81 (strain ED1a)).